A 60-amino-acid chain; its full sequence is Cytochrome c oxidase subunit 9, mitochondrial (60 aa).

The Mitochondrial matrix portion of the chain corresponds to 1-18 (MSAIAPITGSLKKRIMKD). The helical transmembrane segment at 19-37 (IAVGMGLGTVLGSYWWWGF) threads the bilayer. Over 38–57 (HKPKIAARENYYTQLAEQKA) the chain is Mitochondrial intermembrane. Positions 58–60 (AEE) are cleaved as a propeptide — removed in mature form.

This sequence belongs to the fungal cytochrome c oxidase subunit 7a family. Component of the cytochrome c oxidase (complex IV, CIV), a multisubunit enzyme composed of a catalytic core of 3 subunits and several supernumerary subunits. The complex exists as a monomer or a dimer and forms supercomplexes (SCs) in the inner mitochondrial membrane with ubiquinol-cytochrome c oxidoreductase (cytochrome b-c1 complex, complex III, CIII).

It localises to the mitochondrion inner membrane. It participates in energy metabolism; oxidative phosphorylation. In terms of biological role, component of the cytochrome c oxidase, the last enzyme in the mitochondrial electron transport chain which drives oxidative phosphorylation. The respiratory chain contains 3 multisubunit complexes succinate dehydrogenase (complex II, CII), ubiquinol-cytochrome c oxidoreductase (cytochrome b-c1 complex, complex III, CIII) and cytochrome c oxidase (complex IV, CIV), that cooperate to transfer electrons derived from NADH and succinate to molecular oxygen, creating an electrochemical gradient over the inner membrane that drives transmembrane transport and the ATP synthase. Cytochrome c oxidase is the component of the respiratory chain that catalyzes the reduction of oxygen to water. Electrons originating from reduced cytochrome c in the intermembrane space (IMS) are transferred via the dinuclear copper A center (CU(A)) of subunit 2 and heme A of subunit 1 to the active site in subunit 1, a binuclear center (BNC) formed by heme A3 and copper B (CU(B)). The BNC reduces molecular oxygen to 2 water molecules using 4 electrons from cytochrome c in the IMS and 4 protons from the mitochondrial matrix. This chain is Cytochrome c oxidase subunit 9, mitochondrial (COX9), found in Eremothecium gossypii (strain ATCC 10895 / CBS 109.51 / FGSC 9923 / NRRL Y-1056) (Yeast).